The sequence spans 102 residues: Small ribosomal subunit protein uS10 (102 aa).

The protein belongs to the universal ribosomal protein uS10 family. Part of the 30S ribosomal subunit.

In terms of biological role, involved in the binding of tRNA to the ribosomes. The polypeptide is Small ribosomal subunit protein uS10 (Paracoccus denitrificans (strain Pd 1222)).